Reading from the N-terminus, the 203-residue chain is Signal peptidase I (203 aa).

The tract at residues methionine 1–serine 26 is disordered. Topologically, residues methionine 1–lysine 33 are cytoplasmic. Residues proline 17–serine 26 are compositionally biased toward low complexity. The helical transmembrane segment at threonine 34–alanine 50 threads the bilayer. At glutamate 51–tyrosine 203 the chain is on the extracellular side. Catalysis depends on residues serine 59 and lysine 109.

This sequence belongs to the peptidase S26 family.

The protein localises to the cell membrane. It catalyses the reaction Cleavage of hydrophobic, N-terminal signal or leader sequences from secreted and periplasmic proteins.. The chain is Signal peptidase I (lepB) from Leptolyngbya laminosa (Phormidium laminosum).